The sequence spans 89 residues: Small ribosomal subunit protein uS15 (89 aa).

The tract at residues 1 to 24 is disordered; that stretch reads MSLDTTEKQQLINSHQTHATDTGS. Residues 8-24 are compositionally biased toward polar residues; it reads KQQLINSHQTHATDTGS.

It belongs to the universal ribosomal protein uS15 family. As to quaternary structure, part of the 30S ribosomal subunit. Forms a bridge to the 50S subunit in the 70S ribosome, contacting the 23S rRNA.

One of the primary rRNA binding proteins, it binds directly to 16S rRNA where it helps nucleate assembly of the platform of the 30S subunit by binding and bridging several RNA helices of the 16S rRNA. Its function is as follows. Forms an intersubunit bridge (bridge B4) with the 23S rRNA of the 50S subunit in the ribosome. This chain is Small ribosomal subunit protein uS15, found in Synechococcus sp. (strain CC9311).